The chain runs to 382 residues: Anhydro-N-acetylmuramic acid kinase (382 aa).

15 to 22 contributes to the ATP binding site; it reads GTSLDGVD.

The protein belongs to the anhydro-N-acetylmuramic acid kinase family.

The enzyme catalyses 1,6-anhydro-N-acetyl-beta-muramate + ATP + H2O = N-acetyl-D-muramate 6-phosphate + ADP + H(+). Its pathway is amino-sugar metabolism; 1,6-anhydro-N-acetylmuramate degradation. It functions in the pathway cell wall biogenesis; peptidoglycan recycling. Functionally, catalyzes the specific phosphorylation of 1,6-anhydro-N-acetylmuramic acid (anhMurNAc) with the simultaneous cleavage of the 1,6-anhydro ring, generating MurNAc-6-P. Is required for the utilization of anhMurNAc either imported from the medium or derived from its own cell wall murein, and thus plays a role in cell wall recycling. The polypeptide is Anhydro-N-acetylmuramic acid kinase (Haemophilus influenzae (strain ATCC 51907 / DSM 11121 / KW20 / Rd)).